We begin with the raw amino-acid sequence, 211 residues long: Large ribosomal subunit protein uL4 (211 aa).

The segment covering 41–53 (QAHSRQGTASTLT) has biased composition (polar residues). Positions 41 to 78 (QAHSRQGTASTLTRAEVRGGGRKPYKQKGTGRARQGTI) are disordered. The segment covering 60 to 71 (GGRKPYKQKGTG) has biased composition (basic residues).

It belongs to the universal ribosomal protein uL4 family. In terms of assembly, part of the 50S ribosomal subunit.

One of the primary rRNA binding proteins, this protein initially binds near the 5'-end of the 23S rRNA. It is important during the early stages of 50S assembly. It makes multiple contacts with different domains of the 23S rRNA in the assembled 50S subunit and ribosome. Functionally, forms part of the polypeptide exit tunnel. The protein is Large ribosomal subunit protein uL4 of Prochlorococcus marinus (strain MIT 9313).